Here is a 287-residue protein sequence, read N- to C-terminus: ATP synthase gamma chain (287 aa).

It belongs to the ATPase gamma chain family. F-type ATPases have 2 components, CF(1) - the catalytic core - and CF(0) - the membrane proton channel. CF(1) has five subunits: alpha(3), beta(3), gamma(1), delta(1), epsilon(1). CF(0) has three main subunits: a, b and c.

It is found in the cell inner membrane. Functionally, produces ATP from ADP in the presence of a proton gradient across the membrane. The gamma chain is believed to be important in regulating ATPase activity and the flow of protons through the CF(0) complex. In Enterobacter sp. (strain 638), this protein is ATP synthase gamma chain.